The chain runs to 105 residues: Large ribosomal subunit protein uL24 (105 aa).

This sequence belongs to the universal ribosomal protein uL24 family. In terms of assembly, part of the 50S ribosomal subunit.

One of two assembly initiator proteins, it binds directly to the 5'-end of the 23S rRNA, where it nucleates assembly of the 50S subunit. In terms of biological role, one of the proteins that surrounds the polypeptide exit tunnel on the outside of the subunit. In Methylobacillus flagellatus (strain ATCC 51484 / DSM 6875 / VKM B-1610 / KT), this protein is Large ribosomal subunit protein uL24.